The primary structure comprises 307 residues: tRNA-cytidine(32) 2-sulfurtransferase (307 aa).

The PP-loop motif signature appears at 44–49 (SGGKDS). [4Fe-4S] cluster is bound by residues Cys-119, Cys-122, and Cys-210.

This sequence belongs to the TtcA family. In terms of assembly, homodimer. Requires Mg(2+) as cofactor. [4Fe-4S] cluster serves as cofactor.

The protein localises to the cytoplasm. It carries out the reaction cytidine(32) in tRNA + S-sulfanyl-L-cysteinyl-[cysteine desulfurase] + AH2 + ATP = 2-thiocytidine(32) in tRNA + L-cysteinyl-[cysteine desulfurase] + A + AMP + diphosphate + H(+). Its pathway is tRNA modification. In terms of biological role, catalyzes the ATP-dependent 2-thiolation of cytidine in position 32 of tRNA, to form 2-thiocytidine (s(2)C32). The sulfur atoms are provided by the cysteine/cysteine desulfurase (IscS) system. In Aliivibrio salmonicida (strain LFI1238) (Vibrio salmonicida (strain LFI1238)), this protein is tRNA-cytidine(32) 2-sulfurtransferase.